Here is a 49-residue protein sequence, read N- to C-terminus: Defensin Tk-AMP-D1 (49 aa).

4 cysteine pairs are disulfide-bonded: Cys-3/Cys-49, Cys-14/Cys-34, Cys-20/Cys-43, and Cys-24/Cys-45.

Its function is as follows. Has weak antifungal activity against F.graminearum and F.verticillioides below 30 ug/ml, but not against A.consortiale B.cinerea, H.sativum, F.culmorum, C.graminicola and D.maydis. The polypeptide is Defensin Tk-AMP-D1 (Triticum kiharae (Wheat)).